A 387-amino-acid chain; its full sequence is MTSHPVFIDLSLDEQVQELRKYFKKLGAEISSEKSNKGVEDDLHKIIGVCEVCFKDGEPAQIDGILNSIVSIMITIPLDRGENIVLAYCEKMTKAPNQPLAKVCLQSLWRLFNNLDTASPLRYHVYYHLVQVAKQCDQVLEVFTGVDQLKSQFANCPPSSEQMQKLYRLLHDVTKDTNLELSSKVMIELLGTYTADNACVAREDAMKCIVTALADPNTFLLDPLLSLKPVRFLEGDLIHDLLSIFVSDKLPSYVQFYEDHKEFVNSQGLNHEQNMKKMRLLTFMQLAESYPEMTFDTLTKELQINEDEVEPFVIEVLKTKLVRARLDQANRKVHISSTMHRTFGAPQWEQLRDLLQAWKENLSSVREGLTNVSSAQLDLARSQKLIH.

Residues 181–340 (LSSKVMIELL…RKVHISSTMH (160 aa)) form the PCI domain.

The protein belongs to the eIF-3 subunit M family. In terms of assembly, component of the eukaryotic translation initiation factor 3 (eIF-3) complex. The eIF-3 complex interacts with pix.

Its subcellular location is the cytoplasm. The protein resides in the golgi apparatus. Functionally, component of the eukaryotic translation initiation factor 3 (eIF-3) complex, which is involved in protein synthesis of a specialized repertoire of mRNAs and, together with other initiation factors, stimulates binding of mRNA and methionyl-tRNAi to the 40S ribosome. The eIF-3 complex specifically targets and initiates translation of a subset of mRNAs involved in cell proliferation. This Drosophila mojavensis (Fruit fly) protein is Eukaryotic translation initiation factor 3 subunit M.